The chain runs to 523 residues: Non-specific phospholipase C3 (523 aa).

The segment at 44 to 64 is disordered; it reads DGVSESEPRSNPLSTSDPNSA. A compositionally biased stretch (polar residues) spans 52–64; the sequence is RSNPLSTSDPNSA.

Belongs to the bacterial phospholipase C family. As to expression, expressed in root tips, cotyledons, on leaf margins, stems, young anthers and funiculus.

The catalysed reaction is a 1-acyl-sn-glycero-3-phosphate + H2O = a 1-acyl-sn-glycerol + phosphate. Its function is as follows. Possesses specific phosphatase activity toward lysophosphatidic acid (LPA) in vitro. Does not show phospholipase C activity. May play a role in signal transduction and storage lipid synthesis. May be involved in brassinolide-mediated signaling in root development. The sequence is that of Non-specific phospholipase C3 (NPC3) from Arabidopsis thaliana (Mouse-ear cress).